A 1483-amino-acid chain; its full sequence is Heme-responsive zinc finger transcription factor HAP1 (1483 aa).

Over residues 1 to 50 (MSNTPYNSSVPSIASMTQSSVSRSPNMHTATTPGANTSSNSPPLHMSSDS) the composition is skewed to polar residues. Residues 1-56 (MSNTPYNSSVPSIASMTQSSVSRSPNMHTATTPGANTSSNSPPLHMSSDSSKIKRK) form a disordered region. Zn(2+) contacts are provided by Cys64, Cys67, Cys74, Cys81, Cys84, and Cys93. Positions 64–93 (CTICRKRKVKCDKLRPHCQQCTKTGVAHLC) form a DNA-binding region, zn(2)-C6 fungal-type. A coiled-coil region spans residues 105–134 (EKELLKDNELKKLRERVKSLEKTLSKVHSS). Residues 162–176 (VNANTGSASSASHMH) are compositionally biased toward polar residues. The interval 162 to 208 (VNANTGSASSASHMHQQQQQQQQQEQQQDFSRSANANANSSSLSISN) is disordered. The segment covering 177 to 208 (QQQQQQQQQEQQQDFSRSANANANSSSLSISN) has biased composition (low complexity). Residues 244-444 (KGDPYLKLLW…NTIPHHQPQS (201 aa)) form a heme-responsive; required for HMC formation region. 6 HRM repeats span residues 280-285 (KCPINH), 299-304 (KCPVDH), 323-328 (KCPVDH), 347-352 (RCPVDH), 389-394 (KCPVDH), and 415-420 (RCPIDH). 2 stretches are compositionally biased toward polar residues: residues 432-447 (STHNTIPHHQPQSGSH) and 706-734 (QLNATIPATSQDVSNNGSKKANPSTNPTL). Disordered regions lie at residues 432–458 (STHNTIPHHQPQSGSHARSHPAQNRKH) and 706–767 (QLNA…KENQ). Residues 735–759 (NNNMSAATTNSSSRSGSADSRSGSN) are compositionally biased toward low complexity. One copy of the HRM 7 repeat lies at 1192–1197 (KCPVYQ). Disordered regions lie at residues 1266-1289 (DGYIDNNSNNDIPRGISPKPSNGL) and 1386-1411 (NTDTSANGSALSTLTSPQGSDLASNS). Residues 1388–1411 (DTSANGSALSTLTSPQGSDLASNS) are compositionally biased toward polar residues.

Binds DNA as a homodimer. Interacts with SRO9 and YDJ1. In the absence of heme, binds to at least four cellular proteins, including YDJ1 and SRO9, forming a high-molecular-weight complex (HMC) which results in repression of its activity and dictates its DNA-binding specificity.

It localises to the nucleus. In terms of biological role, regulation of oxygen dependent gene expression. It modulates the expression of Iso-1 (CYP1) and Iso-2 (CYP3) cytochrome c. In response to heme, promotes transcription of genes encoding functions required for respiration, controlling oxidative damage and repression of anaerobic genes. Binds to the sequence 5'-CGGNNNTNNCGG-3'. The protein is Heme-responsive zinc finger transcription factor HAP1 (HAP1) of Saccharomyces cerevisiae (strain JAY291) (Baker's yeast).